The primary structure comprises 70 residues: Putative defensin-like protein 73 (70 aa).

The N-terminal stretch at 1–29 (MNCKIEFMSFLVMTSIVILFLFVSGKVEA) is a signal peptide. Cystine bridges form between C33/C68, C37/C57, C43/C66, and C47/C67.

It belongs to the DEFL family.

The protein resides in the secreted. The protein is Putative defensin-like protein 73 (LCR44) of Arabidopsis thaliana (Mouse-ear cress).